A 1710-amino-acid polypeptide reads, in one-letter code: Phosphatidylinositol 4-phosphate 5-kinase (1710 aa).

Residues 68-98 (YKSIFKAFDLNNDNYLDFYEFCVAINIMLKG) enclose the EF-hand domain. Ca(2+) is bound by residues Asp-76, Asn-78, Asp-80, Tyr-82, and Glu-87. Disordered regions lie at residues 139–255 (NNMN…DPIN), 427–479 (KQKK…IKSV), and 895–993 (GEGH…HNNN). Low complexity predominate over residues 140–235 (NMNGDNINGD…HNNNSHNNNN (96 aa)). The span at 236–248 (KAENSLGQPLNEK) shows a compositional bias: polar residues. Positions 427–444 (KQKKKKKKKKKKKKKKEK) are enriched in basic residues. The span at 456 to 468 (SSSMENKSQNKSQ) shows a compositional bias: low complexity. The span at 902 to 973 (EEEEKNDDEE…DDNDDNDDND (72 aa)) shows a compositional bias: acidic residues. A compositionally biased stretch (basic and acidic residues) spans 974-987 (EKSNIKIENKKDVP). The region spanning 1334–1709 (QKKTFHRILA…RFVTFIENHM (376 aa)) is the PIPK domain.

It carries out the reaction a 1,2-diacyl-sn-glycero-3-phospho-(1D-myo-inositol 4-phosphate) + ATP = a 1,2-diacyl-sn-glycero-3-phospho-(1D-myo-inositol-4,5-bisphosphate) + ADP + H(+). Catalytic activity is increase by myristoylated ARF1. Phosphatidic acid has no effect on catalytic activity. In terms of biological role, catalyzes the phosphorylation of phosphatidylinositol 4-phosphate (PtdIns(4)P/PI4P) to form phosphatidylinositol 4,5-bisphosphate (PtdIns(4,5)P2/PIP2), a lipid second messenger that regulates several cellular processes. This Plasmodium falciparum (isolate 3D7) protein is Phosphatidylinositol 4-phosphate 5-kinase.